A 397-amino-acid chain; its full sequence is Succinate--CoA ligase [ADP-forming] subunit beta (397 aa).

One can recognise an ATP-grasp domain in the interval 9–254; it reads KALLKGYGAP…ETEEDAKEIE (246 aa). ATP-binding positions include K46, 53 to 55, E109, A112, and E117; that span reads GRG. 2 residues coordinate Mg(2+): N209 and D223. Residues N274 and 331–333 each bind substrate; that span reads GIM.

Belongs to the succinate/malate CoA ligase beta subunit family. In terms of assembly, heterotetramer of two alpha and two beta subunits. It depends on Mg(2+) as a cofactor.

The enzyme catalyses succinate + ATP + CoA = succinyl-CoA + ADP + phosphate. It carries out the reaction GTP + succinate + CoA = succinyl-CoA + GDP + phosphate. It functions in the pathway carbohydrate metabolism; tricarboxylic acid cycle; succinate from succinyl-CoA (ligase route): step 1/1. Succinyl-CoA synthetase functions in the citric acid cycle (TCA), coupling the hydrolysis of succinyl-CoA to the synthesis of either ATP or GTP and thus represents the only step of substrate-level phosphorylation in the TCA. The beta subunit provides nucleotide specificity of the enzyme and binds the substrate succinate, while the binding sites for coenzyme A and phosphate are found in the alpha subunit. The protein is Succinate--CoA ligase [ADP-forming] subunit beta of Rhizobium johnstonii (strain DSM 114642 / LMG 32736 / 3841) (Rhizobium leguminosarum bv. viciae).